Here is a 251-residue protein sequence, read N- to C-terminus: uncharacterized protein (251 aa).

It to M.jannaschii MJ1311.

This is an uncharacterized protein from Methanocaldococcus jannaschii (strain ATCC 43067 / DSM 2661 / JAL-1 / JCM 10045 / NBRC 100440) (Methanococcus jannaschii).